Here is a 397-residue protein sequence, read N- to C-terminus: Bifunctional enzyme IspD/IspF (397 aa).

The tract at residues 1 to 236 is 2-C-methyl-D-erythritol 4-phosphate cytidylyltransferase; it reads MSIAAIILAA…LKGMQIFPDI (236 aa). The interval 237–397 is 2-C-methyl-D-erythritol 2,4-cyclodiphosphate synthase; the sequence is RTGNGYDVHS…TVIYPGEIPK (161 aa). Asp-243 and His-245 together coordinate a divalent metal cation. Residues 243–245 and 269–270 each bind 4-CDP-2-C-methyl-D-erythritol 2-phosphate; these read DVH and HS. His-277 is a binding site for a divalent metal cation. 4-CDP-2-C-methyl-D-erythritol 2-phosphate-binding positions include 291 to 293, 367 to 370, Phe-374, and Arg-377; these read DIG and TTNE.

This sequence in the N-terminal section; belongs to the IspD/TarI cytidylyltransferase family. IspD subfamily. The protein in the C-terminal section; belongs to the IspF family. A divalent metal cation serves as cofactor.

It carries out the reaction 2-C-methyl-D-erythritol 4-phosphate + CTP + H(+) = 4-CDP-2-C-methyl-D-erythritol + diphosphate. It catalyses the reaction 4-CDP-2-C-methyl-D-erythritol 2-phosphate = 2-C-methyl-D-erythritol 2,4-cyclic diphosphate + CMP. The protein operates within isoprenoid biosynthesis; isopentenyl diphosphate biosynthesis via DXP pathway; isopentenyl diphosphate from 1-deoxy-D-xylulose 5-phosphate: step 2/6. Its pathway is isoprenoid biosynthesis; isopentenyl diphosphate biosynthesis via DXP pathway; isopentenyl diphosphate from 1-deoxy-D-xylulose 5-phosphate: step 4/6. Functionally, bifunctional enzyme that catalyzes the formation of 4-diphosphocytidyl-2-C-methyl-D-erythritol from CTP and 2-C-methyl-D-erythritol 4-phosphate (MEP) (IspD), and catalyzes the conversion of 4-diphosphocytidyl-2-C-methyl-D-erythritol 2-phosphate (CDP-ME2P) to 2-C-methyl-D-erythritol 2,4-cyclodiphosphate (ME-CPP) with a corresponding release of cytidine 5-monophosphate (CMP) (IspF). The protein is Bifunctional enzyme IspD/IspF of Bartonella bacilliformis (strain ATCC 35685 / KC583 / Herrer 020/F12,63).